We begin with the raw amino-acid sequence, 220 residues long: Germin-like protein subfamily T member 2 (220 aa).

The N-terminal stretch at 1 to 27 (MTTLQISSSLFRSFLLVICVFVIPSLS) is a signal peptide. A disulfide bridge links cysteine 37 with cysteine 52. Positions 64 to 212 (SGLGGPLNTS…TFRTDDVTVN (149 aa)) constitute a Cupin type-1 domain. Residue asparagine 71 is glycosylated (N-linked (GlcNAc...) asparagine). Mn(2+) is bound by residues histidine 112, histidine 114, and glutamate 119. A glycan (N-linked (GlcNAc...) asparagine) is linked at asparagine 136. Histidine 158 serves as a coordination point for Mn(2+).

This sequence belongs to the germin family. In terms of assembly, oligomer (believed to be a pentamer but probably hexamer).

Its subcellular location is the secreted. The protein resides in the extracellular space. It localises to the apoplast. Its function is as follows. May play a role in plant defense. Probably has no oxalate oxidase activity even if the active site is conserved. This is Germin-like protein subfamily T member 2 from Arabidopsis thaliana (Mouse-ear cress).